We begin with the raw amino-acid sequence, 377 residues long: Protein RecA (377 aa).

66 to 73 (GPESSGKT) provides a ligand contact to ATP. Residues 329-377 (VGVRPEEPTAEPGADAAVTSAAAATDDTAKTVSAPAAKTTKSKAAAAKS) are disordered. Positions 342–377 (ADAAVTSAAAATDDTAKTVSAPAAKTTKSKAAAAKS) are enriched in low complexity.

Belongs to the RecA family.

It localises to the cytoplasm. Its function is as follows. Can catalyze the hydrolysis of ATP in the presence of single-stranded DNA, the ATP-dependent uptake of single-stranded DNA by duplex DNA, and the ATP-dependent hybridization of homologous single-stranded DNAs. It interacts with LexA causing its activation and leading to its autocatalytic cleavage. The polypeptide is Protein RecA (Streptomyces avermitilis (strain ATCC 31267 / DSM 46492 / JCM 5070 / NBRC 14893 / NCIMB 12804 / NRRL 8165 / MA-4680)).